A 353-amino-acid chain; its full sequence is Ribosome biogenesis protein BRX1 homolog (353 aa).

A compositionally biased stretch (basic residues) spans 1–10 (MAATKRKRRG). The tract at residues 1 to 46 (MAATKRKRRGGLAVQAKKLKRDAKDGKLPAKANDVSEEAAEEEKDR) is disordered. One can recognise a Brix domain in the interval 60-249 (ERILIFSSRG…LIKIFQGSFG (190 aa)). Residue K160 forms a Glycyl lysine isopeptide (Lys-Gly) (interchain with G-Cter in SUMO2) linkage. The residue at position 261 (S261) is a Phosphoserine. Position 276 is an N6-acetyllysine (K276). Glycyl lysine isopeptide (Lys-Gly) (interchain with G-Cter in SUMO2) cross-links involve residues K314 and K322.

It belongs to the BRX1 family.

The protein resides in the nucleus. It localises to the nucleolus. Its function is as follows. Required for biogenesis of the 60S ribosomal subunit. This is Ribosome biogenesis protein BRX1 homolog (BRIX1) from Bos taurus (Bovine).